Consider the following 266-residue polypeptide: Killer cell lectin-like receptor 3 (266 aa).

Residues 1-48 (MSEPEVTYSTVRLHKSSGLQKLVRHEETQGPREVGNRKCSAPWQLIVK) are Cytoplasmic-facing. The chain crosses the membrane as a helical; Signal-anchor for type II membrane protein span at residues 49-69 (ALGILCFLLLVTVAVLAVKIF). Over 70–266 (QYNQHKQEIN…CGKKLDKFPD (197 aa)) the chain is Extracellular. 4 N-linked (GlcNAc...) asparagine glycosylation sites follow: Asn79, Asn87, Asn104, and Asn113. Residues 147–151 (WFCYS) are involved in dimerization. An intrachain disulfide couples Cys149 to Cys154. In terms of domain architecture, C-type lectin spans 150-258 (YSTKCYYFIM…CNIPYYCICG (109 aa)). Asn160 is a glycosylation site (N-linked (GlcNAc...) asparagine). Implicated in MHC class I binding regions lie at residues 160 to 162 (NKT), 195 to 196 (IP), 207 to 208 (KK), 224 to 233 (MKIRKMNFKS), and 240 to 245 (SKARIE). 3 cysteine pairs are disulfide-bonded: Cys167/Cys255, Cys171/Cys257, and Cys236/Cys249.

In terms of assembly, homodimer; disulfide-linked.

It localises to the membrane. Receptor on natural killer (NK) cells for class I MHC. The sequence is that of Killer cell lectin-like receptor 3 (Klra3) from Mus musculus (Mouse).